The primary structure comprises 185 residues: Elongation factor P (185 aa).

It belongs to the elongation factor P family.

The protein resides in the cytoplasm. Its pathway is protein biosynthesis; polypeptide chain elongation. Its function is as follows. Involved in peptide bond synthesis. Stimulates efficient translation and peptide-bond synthesis on native or reconstituted 70S ribosomes in vitro. Probably functions indirectly by altering the affinity of the ribosome for aminoacyl-tRNA, thus increasing their reactivity as acceptors for peptidyl transferase. The polypeptide is Elongation factor P (Bacillus mycoides (strain KBAB4) (Bacillus weihenstephanensis)).